Reading from the N-terminus, the 320-residue chain is Pyrroline-5-carboxylate reductase 2 (320 aa).

Position 2 is an N-acetylserine (S2). NADP(+)-binding positions include 6 to 11 (IGAGQL) and S34. 9 residues coordinate NADPH: A8, Q10, L11, S34, E36, N56, V70, K71, and A97. Residues N56, 69-72 (AVKP), and 95-97 (CAA) contribute to the NADP(+) site. E164 lines the L-proline pocket. N230 contacts NADPH. L-proline-binding residues include A237 and T238. Residues 295-305 (PTVSTLTPSSP) show a composition bias toward low complexity. Residues 295 to 320 (PTVSTLTPSSPGKLLTRSLALGGKKD) are disordered. Phosphoserine is present on S304.

Belongs to the pyrroline-5-carboxylate reductase family. Homodecamer; composed of 5 homodimers. Interacts with LTO1.

The protein localises to the cytoplasm. The protein resides in the mitochondrion. It catalyses the reaction L-proline + NADP(+) = (S)-1-pyrroline-5-carboxylate + NADPH + 2 H(+). The catalysed reaction is L-proline + NAD(+) = (S)-1-pyrroline-5-carboxylate + NADH + 2 H(+). Its pathway is amino-acid biosynthesis; L-proline biosynthesis; L-proline from L-glutamate 5-semialdehyde: step 1/1. Its function is as follows. Oxidoreductase that catalyzes the last step in proline biosynthesis, which corresponds to the reduction of pyrroline-5-carboxylate to L-proline using NAD(P)H. At physiologic concentrations, has higher specific activity in the presence of NADH. Involved in cellular response to oxidative stress. In some cell types, such as erythrocytes, its primary function may be the generation of NADP(+). The chain is Pyrroline-5-carboxylate reductase 2 (PYCR2) from Macaca fascicularis (Crab-eating macaque).